Consider the following 97-residue polypeptide: uncharacterized protein (97 aa).

This is an uncharacterized protein from Escherichia coli O157:H7.